A 74-amino-acid chain; its full sequence is Capsid protein VP2 (74 aa).

It is found in the virion. Functionally, this extremely basic protein may tightly bind to SSV1 DNA. Essential for virus function. This chain is Capsid protein VP2 (VP2), found in Saccharolobus solfataricus (Sulfolobus solfataricus).